Here is a 167-residue protein sequence, read N- to C-terminus: Plastocyanin major isoform, chloroplastic (167 aa).

The N-terminal 52 residues, 1–52 (MASVTSATVAIPSFTGLKASTIKSSATVRIQTAAVASPKLTVKSSLKNFGVA), are a transit peptide targeting the chloroplast. Residues 53–68 (AVAAAASIALAGNAMA) constitute a thylakoid transit peptide. A Plastocyanin-like domain is found at 69-167 (IEVLLGGGDG…AGMVGKVTVN (99 aa)). His105, Cys152, His155, and Met160 together coordinate Cu cation.

This sequence belongs to the plastocyanin family. Cu(2+) is required as a cofactor.

It is found in the plastid. The protein resides in the chloroplast thylakoid membrane. Functionally, participates in electron transfer between P700 and the cytochrome b6-f complex in photosystem I. Seems to be the major plastocyanin in Arabidopsis. This Arabidopsis thaliana (Mouse-ear cress) protein is Plastocyanin major isoform, chloroplastic (DRT112).